A 334-amino-acid chain; its full sequence is MTTVYYDQSVTKDALQGKKVAIIGYGSQGHAHAQNLKDNGYDVIIGIRPGCSFDKAKDDGFEVYPVDEAAKQADVIMVLLPDEIQGQVYKEEIEPNLEANNALVFAHGFNIHFGVIQPPENVDVFLVAPKGPGHLVRRTFAEGSAVPALFAVEQDPSGEARDLALSYAKGIGATRAGVLETSFKEETETDLFGEQAVLCGGTTKLVQSGFETLVEAGYQPEIAYFEVLHEMKLIVDLMYEGGMENMRYSISNTAEFGDYVSGPRIITPDVKDNMKAVLDDIQKGNFSDRFIKDNQNNFEEFHKLREEQHGHQIEAVGRELRDMMPFIKSKSIEK.

In terms of domain architecture, KARI N-terminal Rossmann spans 1–181 (MTTVYYDQSV…GATRAGVLET (181 aa)). Residues 25–28 (YGSQ), R48, S52, and 82–85 (DEIQ) each bind NADP(+). The active site involves H107. Residue G133 participates in NADP(+) binding. The KARI C-terminal knotted domain occupies 182 to 327 (SFKEETETDL…RELRDMMPFI (146 aa)). Residues D190, E194, E226, and E230 each contribute to the Mg(2+) site. S251 contacts substrate.

The protein belongs to the ketol-acid reductoisomerase family. The cofactor is Mg(2+).

It catalyses the reaction (2R)-2,3-dihydroxy-3-methylbutanoate + NADP(+) = (2S)-2-acetolactate + NADPH + H(+). The enzyme catalyses (2R,3R)-2,3-dihydroxy-3-methylpentanoate + NADP(+) = (S)-2-ethyl-2-hydroxy-3-oxobutanoate + NADPH + H(+). It functions in the pathway amino-acid biosynthesis; L-isoleucine biosynthesis; L-isoleucine from 2-oxobutanoate: step 2/4. It participates in amino-acid biosynthesis; L-valine biosynthesis; L-valine from pyruvate: step 2/4. Its function is as follows. Involved in the biosynthesis of branched-chain amino acids (BCAA). Catalyzes an alkyl-migration followed by a ketol-acid reduction of (S)-2-acetolactate (S2AL) to yield (R)-2,3-dihydroxy-isovalerate. In the isomerase reaction, S2AL is rearranged via a Mg-dependent methyl migration to produce 3-hydroxy-3-methyl-2-ketobutyrate (HMKB). In the reductase reaction, this 2-ketoacid undergoes a metal-dependent reduction by NADPH to yield (R)-2,3-dihydroxy-isovalerate. The sequence is that of Ketol-acid reductoisomerase (NADP(+)) from Staphylococcus saprophyticus subsp. saprophyticus (strain ATCC 15305 / DSM 20229 / NCIMB 8711 / NCTC 7292 / S-41).